Reading from the N-terminus, the 304-residue chain is Aquaglyceroporin-3 (304 aa).

At 1–68 the chain is on the cytoplasmic side; it reads MQSQPDNVAY…LRLNYRDYMG (68 aa). Residues 69-89 traverse the membrane as a helical segment; the sequence is ELLGTFVLLFMGNGVVATVII. Residues 90 to 95 are Extracellular-facing; that stretch reads DGKLGF. Residues 96–116 traverse the membrane as a helical segment; it reads LSITLGWGIAVTMALYVSLGI. At 117-142 the chain is on the cytoplasmic side; sequence SSGHLNPAVTVGNAVFGDFPWRKVPG. A helical transmembrane segment spans residues 143-163; the sequence is YIAAQMLGAFLGAACAYGVFA. Over 164–196 the chain is Extracellular; it reads DLLKAHGGGELIAFGEKGTAGVFSTYPRDSNGL. Residues 197–217 form a helical membrane-spanning segment; sequence FSCIFGEFICTAMLLFCVCGI. Residues 218 to 231 are Cytoplasmic-facing; it reads FDPNNSPAKGHEPL. Residues 232 to 252 form a helical membrane-spanning segment; that stretch reads AVGALVFAIGNNIGYSTGYAI. Residues 253–277 are Extracellular-facing; that stretch reads NPARDFGPRVFSSFLYGGEVFSHAN. The chain crosses the membrane as a helical span at residues 278–298; it reads YYFWVPLVIPLFGGIFGLFLY. Residues 299-304 are Cytoplasmic-facing; the sequence is KYFVPH.

This sequence belongs to the MIP/aquaporin (TC 1.A.8) family.

It is found in the cell membrane. The catalysed reaction is glycerol(in) = glycerol(out). It catalyses the reaction H2O(in) = H2O(out). It carries out the reaction urea(in) = urea(out). Its function is as follows. Mediates water and glycerol transport across the cell membrane. Permeable to urea. Permeable to methylamine/methylammonium. Permeable to dihydroxyacetone. Permeable to erythritol and ribitol. The chain is Aquaglyceroporin-3 from Trypanosoma brucei brucei.